The primary structure comprises 274 residues: Outer surface protein A (274 aa).

The signal sequence occupies residues 1-16 (MKKYLLGIGLILALIA). The N-palmitoyl cysteine moiety is linked to residue C17. A lipid anchor (S-diacylglycerol cysteine) is attached at C17.

Belongs to the OspA lipoprotein family.

It localises to the cell outer membrane. The protein localises to the cell surface. The polypeptide is Outer surface protein A (Borreliella burgdorferi (Lyme disease spirochete)).